Consider the following 137-residue polypeptide: Histone H2B (137 aa).

A compositionally biased stretch (basic and acidic residues) spans 1-10 (MPPKAADKKP). Residues 1 to 45 (MPPKAADKKPASKAPATASKAPEKKDAGKKTAASGDKKKRTKTRK) are disordered. An N6-acetyllysine; alternate mark is found at K8 and K9. Residues K8 and K9 each participate in a glycyl lysine isopeptide (Lys-Gly) (interchain with G-Cter in SUMO); alternate cross-link. S12 is modified (phosphoserine). K13 carries the N6-acetyllysine modification. An N6-acetyllysine; alternate modification is found at K24. A Glycyl lysine isopeptide (Lys-Gly) (interchain with G-Cter in SUMO); alternate cross-link involves residue K24. A Glycyl lysine isopeptide (Lys-Gly) (interchain with G-Cter in SUMO) cross-link involves residue K25. K131 is covalently cross-linked (Glycyl lysine isopeptide (Lys-Gly) (interchain with G-Cter in ubiquitin)).

It belongs to the histone H2B family. As to quaternary structure, the nucleosome is a histone octamer containing two molecules each of H2A, H2B, H3 and H4 assembled in one H3-H4 heterotetramer and two H2A-H2B heterodimers. The octamer wraps approximately 147 bp of DNA. Monoubiquitinated by the UBC2-BRE1 complex to form H2BK123ub1. H2BK123ub1 gives a specific tag for epigenetic transcriptional activation and is also prerequisite for H3K4me and H3K79me formation. H2BK123ub1 also modulates the formation of double-strand breaks during meiosis and is a prerequisite for DNA-damage checkpoint activation. In terms of processing, phosphorylated by STE20 to form H2BS10ph during progression through meiotic prophase. May be correlated with chromosome condensation. Post-translationally, acetylated by GCN5 to form H2BK11ac and H2BK16ac. H2BK16ac can also be formed by ESA1. Acetylation of N-terminal lysines and particularly formation of H2BK11acK16ac has a positive effect on transcription. Sumoylation to form H2BK6su or H2BK7su, and probably also H2BK16su or H2BK17su, occurs preferentially near the telomeres and represses gene transcription.

The protein localises to the nucleus. The protein resides in the chromosome. Functionally, core component of nucleosome. Nucleosomes wrap and compact DNA into chromatin, limiting DNA accessibility to the cellular machineries which require DNA as a template. Histones thereby play a central role in transcription regulation, DNA repair, DNA replication and chromosomal stability. DNA accessibility is regulated via a complex set of post-translational modifications of histones, also called histone code, and nucleosome remodeling. The chain is Histone H2B (HTB1) from Pyricularia oryzae (strain Y34) (Rice blast fungus).